A 262-amino-acid polypeptide reads, in one-letter code: Hydroxyethylthiazole kinase (262 aa).

Position 50 (Met50) interacts with substrate. 2 residues coordinate ATP: Arg125 and Thr171. Substrate is bound at residue Gly198.

Belongs to the Thz kinase family. Mg(2+) serves as cofactor.

The catalysed reaction is 5-(2-hydroxyethyl)-4-methylthiazole + ATP = 4-methyl-5-(2-phosphooxyethyl)-thiazole + ADP + H(+). Its pathway is cofactor biosynthesis; thiamine diphosphate biosynthesis; 4-methyl-5-(2-phosphoethyl)-thiazole from 5-(2-hydroxyethyl)-4-methylthiazole: step 1/1. Its function is as follows. Catalyzes the phosphorylation of the hydroxyl group of 4-methyl-5-beta-hydroxyethylthiazole (THZ). This Escherichia coli O81 (strain ED1a) protein is Hydroxyethylthiazole kinase.